Reading from the N-terminus, the 1635-residue chain is U3 small nucleolar RNA-associated protein 10 (1635 aa).

Residues 781–803 (TTSMDAPSDESTKRRRRSSSSTV) form a disordered region. Transmembrane regions (helical) follow at residues 1141–1161 (PELL…TVAG) and 1288–1308 (IALS…SFMV).

This sequence belongs to the HEATR1/UTP10 family. As to quaternary structure, component of the ribosomal small subunit (SSU) processome.

The protein resides in the nucleus. The protein localises to the nucleolus. Its subcellular location is the membrane. Involved in nucleolar processing of pre-18S ribosomal RNA. Involved in ribosome biosynthesis. The protein is U3 small nucleolar RNA-associated protein 10 of Yarrowia lipolytica (strain CLIB 122 / E 150) (Yeast).